A 496-amino-acid polypeptide reads, in one-letter code: Chaperone SurA (496 aa).

An N-terminal signal peptide occupies residues 1-42 (MACKSTAVRSATRVAPTRRLGMVTGALVALMAGAALLPAAHA). A disordered region spans residues 53–80 (RGIFTTPDASPSQPLLRGTLPGPSTASG). PpiC domains are found at residues 235–337 (VQEY…KLVD) and 349–447 (VAQT…QVEG).

It is found in the periplasm. It catalyses the reaction [protein]-peptidylproline (omega=180) = [protein]-peptidylproline (omega=0). In terms of biological role, chaperone involved in the correct folding and assembly of outer membrane proteins. Recognizes specific patterns of aromatic residues and the orientation of their side chains, which are found more frequently in integral outer membrane proteins. May act in both early periplasmic and late outer membrane-associated steps of protein maturation. The sequence is that of Chaperone SurA from Ralstonia nicotianae (strain ATCC BAA-1114 / GMI1000) (Ralstonia solanacearum).